Reading from the N-terminus, the 115-residue chain is Nitrogenase iron-iron protein delta chain (115 aa).

Hexamer of two alpha, two beta, and two delta chains. It depends on iron-sulfur cluster as a cofactor.

It carries out the reaction N2 + 8 reduced [2Fe-2S]-[ferredoxin] + 16 ATP + 16 H2O = H2 + 8 oxidized [2Fe-2S]-[ferredoxin] + 2 NH4(+) + 16 ADP + 16 phosphate + 6 H(+). Functionally, the key enzymatic reactions in nitrogen fixation are catalyzed by the nitrogenase complex, which has 2 components: the iron protein (component 2) and a component 1 which is either a molybdenum-iron protein, a vanadium-iron, or an iron-iron protein. In Rhodobacter capsulatus (Rhodopseudomonas capsulata), this protein is Nitrogenase iron-iron protein delta chain (anfG).